The sequence spans 323 residues: Arginase (323 aa).

Residues His119, Asp142, His144, and Asp146 each coordinate Mn(2+). Substrate-binding positions include 144–148 (HADIN), 155–157 (SKN), and Asp198. The Mn(2+) site is built by Asp247 and Asp249. Thr261 and Glu292 together coordinate substrate.

The protein belongs to the arginase family. Homotrimer. It depends on Mn(2+) as a cofactor.

It carries out the reaction L-arginine + H2O = urea + L-ornithine. It participates in nitrogen metabolism; urea cycle; L-ornithine and urea from L-arginine: step 1/1. The polypeptide is Arginase (car1) (Schizosaccharomyces pombe (strain 972 / ATCC 24843) (Fission yeast)).